A 419-amino-acid chain; its full sequence is Adenylosuccinate synthetase (419 aa).

Residues 15–21 and 43–45 each bind GTP; these read GDEGKGK and GHT. Residue Asp-16 is the Proton acceptor of the active site. The Mg(2+) site is built by Asp-16 and Gly-43. Residues 16–19, 41–44, Thr-128, Arg-142, Gln-223, Thr-238, and Arg-302 each bind IMP; these read DEGK and NAGH. Residue His-44 is the Proton donor of the active site. 298–304 is a substrate binding site; the sequence is TTTGRAR. Residues Arg-304, 330 to 332, and 408 to 410 each bind GTP; these read KLD and STS.

It belongs to the adenylosuccinate synthetase family. As to quaternary structure, homodimer. Mg(2+) is required as a cofactor.

It localises to the cytoplasm. The enzyme catalyses IMP + L-aspartate + GTP = N(6)-(1,2-dicarboxyethyl)-AMP + GDP + phosphate + 2 H(+). The protein operates within purine metabolism; AMP biosynthesis via de novo pathway; AMP from IMP: step 1/2. In terms of biological role, plays an important role in the de novo pathway of purine nucleotide biosynthesis. Catalyzes the first committed step in the biosynthesis of AMP from IMP. The protein is Adenylosuccinate synthetase of Sulfurimonas denitrificans (strain ATCC 33889 / DSM 1251) (Thiomicrospira denitrificans (strain ATCC 33889 / DSM 1251)).